An 84-amino-acid polypeptide reads, in one-letter code: Small ribosomal subunit protein uS17 (84 aa).

The protein belongs to the universal ribosomal protein uS17 family. In terms of assembly, part of the 30S ribosomal subunit.

Its function is as follows. One of the primary rRNA binding proteins, it binds specifically to the 5'-end of 16S ribosomal RNA. This is Small ribosomal subunit protein uS17 from Blochmanniella pennsylvanica (strain BPEN).